A 429-amino-acid chain; its full sequence is Probable M18 family aminopeptidase 2 (429 aa).

Residues His-82, His-156, and His-401 each contribute to the Zn(2+) site.

It belongs to the peptidase M18 family. The cofactor is Zn(2+).

The sequence is that of Probable M18 family aminopeptidase 2 from Pseudomonas fluorescens (strain Pf0-1).